The primary structure comprises 108 residues: Cell cycle protein GpsB (108 aa).

A coiled-coil region spans residues 32 to 69; it reads LDNVIKDYENFNAQIEALKAENEALKKAKFQARNTVSA.

It belongs to the GpsB family. In terms of assembly, forms polymers through the coiled coil domains. Interacts with PBP1, MreC and EzrA.

The protein resides in the cytoplasm. Divisome component that associates with the complex late in its assembly, after the Z-ring is formed, and is dependent on DivIC and PBP2B for its recruitment to the divisome. Together with EzrA, is a key component of the system that regulates PBP1 localization during cell cycle progression. Its main role could be the removal of PBP1 from the cell pole after pole maturation is completed. Also contributes to the recruitment of PBP1 to the division complex. Not essential for septum formation. The protein is Cell cycle protein GpsB of Streptococcus pyogenes serotype M28 (strain MGAS6180).